The chain runs to 465 residues: Protein Loquacious (465 aa).

Residues 1–337 form a necessary for enhancing pre-miRNA processing by Dcr-1 region; the sequence is MDQENFHGSS…DSICGELEGE (337 aa). The interval 1 to 379 is not required for interaction with Dcr-1; the sequence is MDQENFHGSS…TLKNATGKKL (379 aa). The interval 1 to 392 is important for homodimerization and interaction with Dcr-1; the sequence is MDQENFHGSS…QKTCLKNNKI (392 aa). The sufficient for binding RNA stretch occupies residues 129–211; the sequence is NGLAMKTPVS…DKLIGAQLPE (83 aa). The segment at 129-322 is necessary for promoting preferential binding of Dcr-2 to the less stably base paired ends of siRNAs; that stretch reads NGLAMKTPVS…WMRLQETPID (194 aa). In terms of domain architecture, DRBM 1 spans 135 to 206; sequence TPVSILQELL…ARALIDKLIG (72 aa). The enables simultaneous binding of both DRBM 1 and 2 domains to dsRNA stretch occupies residues 209-249; the sequence is LPESPSSSAGPSVTGLTVAGSGGDGNANATGGGDASDKTVG. The tract at residues 210–246 is disordered; it reads PESPSSSAGPSVTGLTVAGSGGDGNANATGGGDASDK. Positions 211–223 are enriched in polar residues; that stretch reads ESPSSSAGPSVTG. The segment at 220–465 is necessary and sufficient for enhancing processing of pre-miRNAs by Dcr-1; it reads SVTGLTVAGS…LEYLKIMTKK (246 aa). Positions 228 to 242 are enriched in gly residues; sequence GSGGDGNANATGGGD. The interval 245–322 is sufficient for binding RNA; the sequence is DKTVGNPIGW…WMRLQETPID (78 aa). The DRBM 2 domain maps to 250–318; that stretch reads NPIGWLQEMC…AHRMWMRLQE (69 aa). The necessary for binding pre-miRNA stretch occupies residues 308–309; the sequence is AA. Positions 338-359 are required for binding to Dcr-2 and to fully enhance Dcr-2 mediated cleavage of 3' overhanging termini (3'ovr) and blunt termini (BLT) dsRNAs. However, this region is dispensable for binding the dsRNA substrates; that stretch reads PRSSENYYGELKDISVPTLTTQ. Positions 340 to 465 are necessary for interaction with Dcr-1; the sequence is SSENYYGELK…LEYLKIMTKK (126 aa). The tract at residues 392–463 is sufficent for binding to Dcr-1; the sequence is IDYIKLLGEI…NALEYLKIMT (72 aa). Residues 393-461 form the DRBM 3 domain; sequence DYIKLLGEIA…AQNALEYLKI (69 aa).

Homodimer. In terms of assembly, interacts with dicer enzyme Dcr-1. As to quaternary structure, component of the miRNA-directed RNA-induced loading complex (miRLC), composed of at least Dcr-1, AGO1 and loqs isoform PB (loqs-PB), which processes pre-miRNAs and loads the resulting miRNAs into the Argonaute 1 (AGO1)-containing RNA-induced silencing complex (miRISC) to target the selective destruction of homologous RNAs. Interacts (via DRBM 3 domain) with dicer enzyme Dcr-1 (via helicase domain). Different regions of the Dcr-1-loqs-PB heterodimer collaborate to recognize, bind and position the pre-miRNA for Dcr-1 mediated cleavage. In the absence of miRNA substrates, the heterodimer favors a closed, catalytically incompetent, conformation, whereas binding of authentic pre-miRNA substrates stabilizes the relatively rare open, catalytically competent, conformation of the heterodimer. During substrate recognition, the Dcr-1 PAZ domain and pre-miRNA interact with the DRBM 1 domain of loqs-PB, which likely contributes to substrate recognition and stabilization. At the miRNA binding stage, the Dcr-1 DRBM domain and the loqs-PB DRBM domains then bind the pre-miRNA in tandem to form a tight 'belt' around the pre-miRNA stem, the pre-miRNA loop is docked in the loop-binding region formed by DUF283, DRBM and part of the helicase domain of Dcr-1, and the loqs-PB DRBM 1 and the wing domain of Dcr-1 act together to bind the 5' and 3' pre-miRNA termini within the PAZ and platform domains of Dcr-1. These interactions between the proteins and their pre-miRNA substrate stabilize a distorted form of the pre-miRNA and position the scissile phosphodiester bonds of the pre-miRNA at the RNase III catalytic cleavage sites of Dcr-1. Following Dcr-1 mediated cleavage, the miRNA duplex remains bound to loqs-PB DRBM 1, which dissociates from the Dcr-1 RNase III 1 domain but remains in contact with the PAZ and wing domains suggesting that the heterodimer presents the mature miRNA to AGO2 for loading into the RNA-induced silencing complex (miRISC). Able to interact with dicer enzyme Dcr-1. However, the relevance of such an interaction is unclear in vivo and another report found that it did not interact with Dcr-1. In terms of assembly, monomer. Interacts (via C-terminus) with dicer enzyme Dcr-2 (via N-terminus); interaction is required for RNAi activity in producing siRNAs from a subset of endo- and exo-dsRNAs, and in the alternative siRLC, the interaction enhances the binding preference of the protein for the thermodynamically more stable ends of endogenous siRNAs. Interaction with Dcr-2 is RNA independent, however the isoform must bind both dsRNA and Dcr-2 to enhance Dcr-2 cleavage activity. Does not interact with Dcr-1. Strong expression in males and females. Expression in ovaries is relatively weak. As to expression, strong expression in females and relatively weak expression in males. Strong expression in ovaries.

It localises to the cytoplasm. The protein localises to the cytosol. Its function is as follows. Double-stranded RNA-binding protein which can function in gene silencing by acting with Dcr-1 to enhance its ATP-independent processing of a specific subset of precursor micro-RNAs (pre-miRNAs) to mature miRNAs. Some reports found it was able to enhance the efficiency of pre-miRNA processing by Dcr-1, and can shift the cleavage site of Dcr-1 altering the length of the mature miRNAs produced by Dcr-1 alone. However, in contrast to isoform PB, it is not necessary or sufficient for enhancing miRNA biogenesis, and is not required for development or female germline stem cell (GSC) maintenance. Another report also found that it decreases binding of Dcr-1 to the miRNA substrate let-7. In terms of biological role, double-stranded RNA-binding protein which functions in gene silencing by acting with Dcr-1 to enhance its ATP-independent processing of a specific subset of precursor micro-RNAs (pre-miRNAs) to mature miRNAs. Function is essential for development and female germline stem cell (GSC) maintenance. Functions in miRNA-mediated gene silencing by enhancing the binding affinity and specific pre-miRNA processing activity of Dcr-1, and as part of the loqs-PB-Dcr-1 complex, is involved in substrate discrimination, correctly positioning the pre-miRNA in the Dcr-1 catalytic center for cleavage, and miRNA loading into the Argonaute 1 (Ago1)-containing RNA-induced silencing complex (miRISC). Increases the binding affinity of Dcr-1 to pre-miRNAs, thereby increasing dicing efficiency and broadening the range of substrates that can be processed by the dicer. It may also confer the substrate specificity of Dcr-1 towards pre-miRNAs, as in its absence Dcr-1 displays siRNA-generating activity towards long dsRNA substrates. It can also shift the cleavage site of Dcr-1 for a small number of pre-miRNAs, changing the length of the mature miRNAs produced by Dcr-1 alone. Increases the range of pre-miRNAs that can be processed by Dcr-1, by enhancing the dicing of suboptimal hairpin substrates including ones with mismatches at the dicing site. This function may also promote the generation of novel miRNA genes as it appears to have an important role in processing evolutionarily young miRNA genes, suggesting that it may also enhance dicing of substrates that have not acquired hairpin features required for efficient miRNA processing. As newly emerged miRNAs can have deleterious or beneficial effects on fitness, this function is likely part of a regulatory system that prevents excessive emergence of active miRNA genes and thus keeps them within an optimal range. Also forms a RISC loading complex (miRLC) with Dcr-1 to mediate Ago1-loading of mature miRNAs into the RNA-induced silencing complex (miRISC). In female ovaries, required for Dcr-1 to generate the twenty-three nucleotide isomiR variant of miR-307a which is able to repress its targets Gk2 and tara. Double-stranded RNA-binding protein which has an essential role in gene silencing (RNAi) by acting with Dcr-2 to enhance its ATP-dependent processing of a subset of endogenous (endo) and exogenous (exo) dsRNAs into short interfering RNAs (siRNAs). Functions in RNAi by increasing the initial binding affinity of Dcr-2 to certain dsRNA substrates, and in the absence of r2d2, may also function in siRNA loading into the Argonaute 2 (AGO2)-containing RNA-induced silencing complex (siRISC) and guide strand selection for target silencing by the siRISC. Promotes Dcr-2 cleavage of a subset of dsRNAs, including endo-dsRNAs derived from convergent transcription, inverted repeats and transposons. Also enables Dcr-2 to produce hairpin-derived endo-siRNAs in the presence of cellular inhibitory inorganic phosphate, likely by increasing the binding affinity of the enzyme to the hairpin dsRNAs allowing the dsRNA to displace phosphate bound to Dcr-2. According to many reports, the cleavage reaction mode of Dcr-2 changes according to the termini of the dsRNA substrate, with the enzyme displaying a preference for processing blunt termini (BLT), likely non-self dsRNAs, over dsRNAs with 2 nucleotides 3' overhanging (3'ovr) termini, which are typically the structure of endo-dsRNAs. According to many reports, interaction with Loqs-PD modifies the molecular recognition mechanisms of Dcr-2 towards sub-optimal 3'ovr dsRNA substrates and thus enables the dicer to cleave endo-dsRNA templates with diverse termini. However, according to another report, the mode of cleavage reaction is not affected by the presence or absence of loqs-PD. In the absence of r2d2, may also form an alternative RISC loading complex (siRLC) with Dcr-2 to mediate AGO2-loading of endo- and exo-siRNAs into the RNA-induced silencing complex (siRISC). Many reports suggest that loqs-PD and r2d2 function independently with dcr-2 in distinct siRNA pathways, and may even compete for binding to the enzyme. Loaded siRNAs serve as a guide to direct the siRISC to complementary RNAs to degrade them or prevent their translation. The siRLC plays an important role in the ATP-dependent asymmetry sensing of the duplex, and is therefore also responsible for the selection of the strand that ultimately acts as the guide siRNA for the siRISC. Thermodynamically asymmetric endo-siRNAs can be pre-oriented in the siRLC by the Loqs-PD and DCr-2 complex, which preferentially binds to the most thermodynamically stable strand prior to loading into the siRISC. Appears to be involved in promoting double-strand breaks (DSBs) following exposure to a low-dose/dose-rate (LDR) of ionizing radiation. In Drosophila melanogaster (Fruit fly), this protein is Protein Loquacious.